The chain runs to 130 residues: Small ribosomal subunit protein uS11 (130 aa).

Residues 108–130 (IEDVTPIPHDGTGRPGGKRGRRV) form a disordered region.

Belongs to the universal ribosomal protein uS11 family. Part of the 30S ribosomal subunit.

In terms of biological role, located on the platform of the 30S subunit. This chain is Small ribosomal subunit protein uS11, found in Methanothermobacter thermautotrophicus (strain ATCC 29096 / DSM 1053 / JCM 10044 / NBRC 100330 / Delta H) (Methanobacterium thermoautotrophicum).